The following is a 179-amino-acid chain: MSLKEYSQEQLKHMSLVELAYEIFRDSKTPITFSELIDEMVRLQGIQKSDLDDRLAQFYTDLNIDGRFISLGDQRWGLRSWYPVDQIEEEVQPAVKTKAKKKKTKAAVVEEDFDEIEEEEEIEELEEDLDLVEDDDDLDLDDDEEIEEEIEDFDEDDDEDDDGLTEIDEDDLDDNEEEK.

In terms of domain architecture, HTH HARE-type spans 14–81 (MSLVELAYEI…GDQRWGLRSW (68 aa)). Positions 108-179 (VVEEDFDEIE…DDLDDNEEEK (72 aa)) are disordered. Residues 109 to 179 (VEEDFDEIEE…DDLDDNEEEK (71 aa)) show a composition bias toward acidic residues.

It belongs to the RpoE family. RNAP is composed of a core of 2 alpha, a beta and a beta' subunits. The core is associated with a delta subunit and one of several sigma factors.

In terms of biological role, participates in both the initiation and recycling phases of transcription. In the presence of the delta subunit, RNAP displays an increased specificity of transcription, a decreased affinity for nucleic acids, and an increased efficiency of RNA synthesis because of enhanced recycling. The protein is Probable DNA-directed RNA polymerase subunit delta of Bacillus pumilus (strain SAFR-032).